The sequence spans 293 residues: Tumor necrosis factor receptor superfamily member 13B (293 aa).

Residues Met-1 to Ser-165 are Extracellular-facing. TNFR-Cys repeat units follow at residues Ser-33–Arg-67 and Ser-70–Cys-104. 6 disulfide bridges follow: Cys-34-Cys-47, Cys-50-Cys-62, Cys-54-Cys-66, Cys-71-Cys-86, Cys-89-Cys-100, and Cys-93-Cys-104. The disordered stretch occupies residues Pro-115–Ala-146. The span at Val-126 to Arg-135 shows a compositional bias: polar residues. Residue Asn-128 is glycosylated (N-linked (GlcNAc...) asparagine). Residues Thr-166–Leu-186 form a helical; Signal-anchor for type III membrane protein membrane-spanning segment. Residues Lys-187–Ala-293 are Cytoplasmic-facing. The disordered stretch occupies residues Pro-192–Pro-226.

In terms of assembly, binds TRAF2, TRAF5 and TRAF6. Binds the NH2-terminal domain of CAMLG with its C-terminus. Highly expressed in spleen, thymus, small intestine and peripheral blood leukocytes. Expressed in resting B-cells and activated T-cells, but not in resting T-cells.

It is found in the membrane. Functionally, receptor for TNFSF13/APRIL and TNFSF13B/TALL1/BAFF/BLYS that binds both ligands with similar high affinity. Mediates calcineurin-dependent activation of NF-AT, as well as activation of NF-kappa-B and AP-1. Involved in the stimulation of B- and T-cell function and the regulation of humoral immunity. The sequence is that of Tumor necrosis factor receptor superfamily member 13B (TNFRSF13B) from Homo sapiens (Human).